The sequence spans 340 residues: uncharacterized protein (340 aa).

A signal peptide spans 1–23 (MQKKVLSLVLVLAVLESIVPVSA).

This is an uncharacterized protein from Archaeoglobus fulgidus (strain ATCC 49558 / DSM 4304 / JCM 9628 / NBRC 100126 / VC-16).